Here is a 788-residue protein sequence, read N- to C-terminus: Protein translocase subunit SecA 2 (788 aa).

Residues Q86, G104–T108, and D493 each bind ATP.

It belongs to the SecA family. As to quaternary structure, monomer and homodimer. Part of the essential Sec protein translocation apparatus which comprises SecA, SecYEG and auxiliary proteins SecDF. Other proteins may also be involved.

It is found in the cell membrane. It localises to the cytoplasm. It catalyses the reaction ATP + H2O + cellular proteinSide 1 = ADP + phosphate + cellular proteinSide 2.. Functionally, part of the Sec protein translocase complex. Interacts with the SecYEG preprotein conducting channel. Has a central role in coupling the hydrolysis of ATP to the transfer of proteins into and across the cell membrane, serving as an ATP-driven molecular motor driving the stepwise translocation of polypeptide chains across the membrane. In Bacillus anthracis, this protein is Protein translocase subunit SecA 2.